We begin with the raw amino-acid sequence, 548 residues long: Thermostable neutral protease NprT (548 aa).

A signal peptide spans 1–25 (MNKRAMLGAIGLAFGLLAAPIGASA). A propeptide spans 26–229 (KGESIVWNEQ…DSRQPGGGQP (204 aa)) (activation peptide). Residues D289, D291, Q293, and D370 each contribute to the Ca(2+) site. H374 is a binding site for Zn(2+). The active site involves E375. Residues H378 and E398 each coordinate Zn(2+). Residues E409, N415, D417, E419, E422, Y425, T426, V429, and D432 each contribute to the Ca(2+) site. The active-site Proton donor is the H463.

It belongs to the peptidase M4 family. Requires Ca(2+) as cofactor. The cofactor is Zn(2+).

The protein localises to the secreted. With respect to regulation, its casein hydrolytic activity is inhibited almost completely by a chelating agent (EDTA), whereas neither diisopropyl fluorophosphate nor phenylmethylsulfonyl fluoride inhibit the proteolytic activity in vitro. In terms of biological role, extracellular zinc metalloprotease. In Geobacillus stearothermophilus (Bacillus stearothermophilus), this protein is Thermostable neutral protease NprT (nprT).